Reading from the N-terminus, the 553-residue chain is Aminotransferase FUM8 (553 aa).

Positions Met1 to Gly25 are cleaved as a signal peptide. Asn480 is a glycosylation site (N-linked (GlcNAc...) asparagine).

It belongs to the class-II pyridoxal-phosphate-dependent aminotransferase family. BioF subfamily. Requires pyridoxal 5'-phosphate as cofactor.

The protein resides in the endoplasmic reticulum. It functions in the pathway mycotoxin biosynthesis. In terms of biological role, aminotransferase; part of the gene cluster that mediates the biosynthesis of fumonisins B1 (FB1), B2 (FB2), B3 (FB3), and B4 (FB4), which are carcinogenic mycotoxins. Within the pathway, FUM8 catalyzes the release of the C-18 polyketide chain from the highly reducing polyketide synthase FUM1 by a nucleophilic attack of a carbanion, which is derived from R-carbon of alanine by decarboxylation, on the carbonyl carbon of polyketide acyl chain. The biosynthesis starts with the FUM1-catalyzed carbon chain assembly from one molecule of acetyl-CoA, eight molecules of malonyl-CoA, and two molecules of methionine (in S-adenosyl form). The C18 polyketide chain is released from the enzyme by a nucleophilic attack of a carbanion, which is derived from R-carbon of alanine by decarboxylation, on the carbonyl carbon of polyketide acyl chain. This step is catalyzed by the pyridoxal 5'-phosphate-dependent aminoacyl transferase FUM8. The resultant 3-keto intermediate is then stereospecifically reduced to a 3-hydroxyl product by reductase FUM13. Subsequent oxidations at C-10 by the cytochrome P450 monooxygenase FUM2, C-14 and C-15 by FUM6, FUM12 or FUM15, tricarballylic esterification of the hydroxyl groups on C-14 and C-15 by acyltransferase FUM14, and C-5 hydroxylation by 2-keto-glutarate-dependent dioxygenase FUM3 furnish the biosynthesis of fumonisins. The tricarballylic moieties are most likely derived from the citric acid cycle, and their addition to the carbon backbone may involve FUM7, FUM10, FUM11 and FUM14. This Gibberella moniliformis (strain M3125 / FGSC 7600) (Maize ear and stalk rot fungus) protein is Aminotransferase FUM8.